We begin with the raw amino-acid sequence, 795 residues long: ATP-dependent RNA helicase DHX15 (795 aa).

Positions 1–111 (MSKRHRLDLG…HTGHTGHTSL (111 aa)) are disordered. Phosphoserine is present on S15. A compositionally biased stretch (basic and acidic residues) spans 20–62 (AGTDGKDRERDRDREDRSKDRDRERDRGDREREREKEKEKELR). A compositionally biased stretch (low complexity) spans 79–110 (ASHSAHSTHSAHSTHSTHSAHSTHTGHTGHTS). In terms of domain architecture, Helicase ATP-binding spans 147 to 313 (TDILVRHQSF…FDNCPLLTIP (167 aa)). Residue 160 to 167 (GETGSGKT) participates in ATP binding. A DEAH box motif is present at residues 260 to 263 (DEAH). One can recognise a Helicase C-terminal domain in the interval 338–518 (TVIQIHMCEE…SVVLQLKKLG (181 aa)). An N6-acetyllysine modification is found at K488. K786 participates in a covalent cross-link: Glycyl lysine isopeptide (Lys-Gly) (interchain with G-Cter in SUMO2).

It belongs to the DEAD box helicase family. DEAH subfamily. DDX15/PRP43 sub-subfamily. In terms of assembly, component of the U11/U12 snRNPs that are part of the U12-type spliceosome. Identified in the Intron Large spliceosome complex (IL, also named intron lariat spliceosome), a post-mRNA release spliceosomal complex containing the excised intron, U2, U5 and U6 snRNPs, and splicing factors; the association may be transient. The IL complex exists in two distinct conformations, one with the DHX15 (ILS2) and one without (ILS1). Interacts with TFIP11 (via G-patch domain); indicative for a recruitment to the IL complex. Interacts with SSB/La. Interacts with GPATCH2 (via G-patch domain); promoting the RNA helicase activity. Interacts with NKRF (via G-patch domain); promoting the RNA helicase activity. Interacts with NLRP6. As to expression, ubiquitous.

The protein resides in the nucleus. It localises to the nucleolus. The enzyme catalyses ATP + H2O = ADP + phosphate + H(+). ATPase activity is enhanced upon binding to G-patch domain-containing proteins. G-patch domain-containing proteins act like a brace that tethers mobile sections of DHX15 together, stabilizing a functional conformation with high RNA affinity, thereby promoting the ATPase activity. In terms of biological role, RNA helicase involved in mRNA processing and antiviral innate immunity. Pre-mRNA processing factor involved in disassembly of spliceosomes after the release of mature mRNA. In cooperation with TFIP11 seem to be involved in the transition of the U2, U5 and U6 snRNP-containing IL complex to the snRNP-free IS complex leading to efficient debranching and turnover of excised introns. Plays a key role in antiviral innate immunity by promoting both MAVS-dependent signaling and NLRP6 inflammasome. Acts as an RNA virus sensor: recognizes and binds viral double stranded RNA (dsRNA) and activates the MAVS-dependent signaling to produce interferon-beta and interferon lambda-3 (IFNL3). Involved in intestinal antiviral innate immunity together with NLRP6: recognizes and binds viral dsRNA and promotes activation of the NLRP6 inflammasome in intestinal epithelial cells to restrict infection by enteric viruses. The NLRP6 inflammasome acts by promoting maturation and secretion of IL18 in the extracellular milieu. Also involved in antibacterial innate immunity by promoting Wnt-induced antimicrobial protein expression in Paneth cells. The polypeptide is ATP-dependent RNA helicase DHX15 (Mus musculus (Mouse)).